Consider the following 170-residue polypeptide: MPVSKQVIATEAITRKVDLDNPKVLAKLKKNMGHMTYGEPAWPNDLLFMFPVVILGTIGVIVGLAVMDPAGVGEPADPFATPLEILPEWYLYPAFHILRIAPNKLLGIALMSAIPVGLLFVPFIENVNKFQNPLRRPVATTVFLIGTLVTLYLGIGATLPLDKWVTLGLF.

3 consecutive transmembrane segments (helical) span residues 46-66 (LLFM…GLAV), 105-125 (LLGI…PFIE), and 141-161 (TVFL…TLPL).

It belongs to the cytochrome b family. PetD subfamily. As to quaternary structure, the 4 large subunits of the cytochrome b6-f complex are cytochrome b6, subunit IV (17 kDa polypeptide, PetD), cytochrome f and the Rieske protein, while the 4 small subunits are PetG, PetL, PetM and PetN. The complex functions as a dimer.

The protein resides in the cellular thylakoid membrane. Functionally, component of the cytochrome b6-f complex, which mediates electron transfer between photosystem II (PSII) and photosystem I (PSI), cyclic electron flow around PSI, and state transitions. This Synechococcus sp. (strain JA-3-3Ab) (Cyanobacteria bacterium Yellowstone A-Prime) protein is Cytochrome b6-f complex subunit 4.